The following is a 470-amino-acid chain: ATP synthase subunit beta (470 aa).

157 to 164 contacts ATP; sequence GGAGVGKT.

This sequence belongs to the ATPase alpha/beta chains family. In terms of assembly, F-type ATPases have 2 components, CF(1) - the catalytic core - and CF(0) - the membrane proton channel. CF(1) has five subunits: alpha(3), beta(3), gamma(1), delta(1), epsilon(1). CF(0) has three main subunits: a(1), b(2) and c(9-12). The alpha and beta chains form an alternating ring which encloses part of the gamma chain. CF(1) is attached to CF(0) by a central stalk formed by the gamma and epsilon chains, while a peripheral stalk is formed by the delta and b chains.

The protein resides in the cell inner membrane. The enzyme catalyses ATP + H2O + 4 H(+)(in) = ADP + phosphate + 5 H(+)(out). Produces ATP from ADP in the presence of a proton gradient across the membrane. The catalytic sites are hosted primarily by the beta subunits. The polypeptide is ATP synthase subunit beta (Citrifermentans bemidjiense (strain ATCC BAA-1014 / DSM 16622 / JCM 12645 / Bem) (Geobacter bemidjiensis)).